The primary structure comprises 157 residues: 1,4-dihydroxy-2-naphthoyl-CoA thioesterase 2 (157 aa).

Residue Glu56 is part of the active site. A Microbody targeting signal motif is present at residues 154-156; that stretch reads ISK.

It belongs to the 4-hydroxybenzoyl-CoA thioesterase family. DHNA-CoA hydrolase subfamily. As to quaternary structure, homotetramers.

The protein resides in the peroxisome. Its pathway is cofactor biosynthesis; phylloquinone biosynthesis. It participates in quinol/quinone metabolism; 1,4-dihydroxy-2-naphthoate biosynthesis; 1,4-dihydroxy-2-naphthoate from chorismate: step 7/7. Functionally, catalyzes the hydrolysis of the thioester bond of 1,4-dihydroxy-2-naphthoyl-CoA (DHNA-CoA) in peroxisomes, a necessary step to form the naphthoquinone ring of phylloquinone (vitamin K(1)). Displayed also slight thioesterase activity towards benzoyl-CoA. Is not active on phenylacetyl-CoA, succinyl-CoA and palmitoyl-CoA thioesters. This Arabidopsis thaliana (Mouse-ear cress) protein is 1,4-dihydroxy-2-naphthoyl-CoA thioesterase 2.